We begin with the raw amino-acid sequence, 319 residues long: MQEIIKCREQLEKAIKDGEFDKALECLKNAKNFKITKDLLKSTDIGKSVGKLRAHKDIGISSQSKELIDKWKQDIEGTSATTTSSSSSSSSSTTSTTTTKTASPSESLKRKSISEDTSDRPTSKPLLQENKKISPPTTPKTSSPPIASLIAPITGANADLRNKTIQLFVEALTTDNDETMSPPEDIAVEIEAEMYDIYRGVSKEYKEKLRSFKFNLKKNDILRLSLLNRQISVAKFCSMDIYSMASDDLKEERKKLDKFNTEASMLGQNNEATTDQFQCGKCKQRKCTYTQLQTRSADEPPTTFVKCCVKGCGNRWRFC.

The TFIIS N-terminal domain maps to 1–78 (MQEIIKCREQ…DKWKQDIEGT (78 aa)). Over residues 78-106 (TSATTTSSSSSSSSSTTSTTTTKTASPSE) the composition is skewed to low complexity. Residues 78–146 (TSATTTSSSS…TTPKTSSPPI (69 aa)) form a disordered region. The segment covering 107-122 (SLKRKSISEDTSDRPT) has biased composition (basic and acidic residues). Over residues 133-146 (ISPPTTPKTSSPPI) the composition is skewed to low complexity. The 113-residue stretch at 160–272 (LRNKTIQLFV…ASMLGQNNEA (113 aa)) folds into the TFIIS central domain. A TFIIS-type zinc finger spans residues 275–317 (DQFQCGKCKQRKCTYTQLQTRSADEPPTTFVKCCVKGCGNRWR). Cys-279, Cys-282, Cys-307, and Cys-312 together coordinate Zn(2+).

The protein belongs to the TFS-II family.

It is found in the nucleus. In terms of biological role, necessary for efficient RNA polymerase II transcription elongation past template-encoded arresting sites. The arresting sites in DNA have the property of trapping a certain fraction of elongating RNA polymerases that pass through, resulting in locked ternary complexes. Cleavage of the nascent transcript by S-II allows the resumption of elongation from the new 3'-terminus. This chain is Transcription elongation factor A protein 1 (tcea1), found in Dictyostelium discoideum (Social amoeba).